A 379-amino-acid chain; its full sequence is uncharacterized protein (379 aa).

3 disordered regions span residues 1–25 (MASDWRRQSTSRGIPNEGQNDEKGK), 128–158 (QGKTTSATTSNSTIRGKPSFGRENSAKIERT), and 355–379 (TEKTSILSPRRRQKRMRSLSSQGDI). Positions 128–141 (QGKTTSATTSNSTI) are enriched in polar residues.

This is an uncharacterized protein from Caenorhabditis elegans.